Reading from the N-terminus, the 121-residue chain is uncharacterized protein (121 aa).

Residues 9-29 (LTILIASIYIIFFVNAAPTLY) form a helical membrane-spanning segment. Positions 91 to 121 (EELPTYPPTMTTPLETTPLDTSPPVLPSAIP) are disordered. The span at 98–113 (PTMTTPLETTPLDTSP) shows a compositional bias: low complexity.

It localises to the host membrane. This is an uncharacterized protein from Alcelaphine herpesvirus 1 (strain C500) (AlHV-1).